Here is a 196-residue protein sequence, read N- to C-terminus: Phosphoheptose isomerase (196 aa).

The 161-residue stretch at 36–196 folds into the SIS domain; sequence MAQALQAEGK…LIDQHLFGGA (161 aa). 51–53 contacts substrate; the sequence is NGG. Zn(2+)-binding residues include histidine 60 and glutamate 64. Residues glutamate 64, 93 to 94, 119 to 121, serine 124, and glutamine 174 each bind substrate; these read ND and STS. Zn(2+) contacts are provided by glutamine 174 and histidine 182.

The protein belongs to the SIS family. GmhA subfamily. As to quaternary structure, homotetramer. Requires Zn(2+) as cofactor.

The protein resides in the cytoplasm. The catalysed reaction is 2 D-sedoheptulose 7-phosphate = D-glycero-alpha-D-manno-heptose 7-phosphate + D-glycero-beta-D-manno-heptose 7-phosphate. It functions in the pathway carbohydrate biosynthesis; D-glycero-D-manno-heptose 7-phosphate biosynthesis; D-glycero-alpha-D-manno-heptose 7-phosphate and D-glycero-beta-D-manno-heptose 7-phosphate from sedoheptulose 7-phosphate: step 1/1. Functionally, catalyzes the isomerization of sedoheptulose 7-phosphate in D-glycero-D-manno-heptose 7-phosphate. The chain is Phosphoheptose isomerase from Alkalilimnicola ehrlichii (strain ATCC BAA-1101 / DSM 17681 / MLHE-1).